The sequence spans 374 residues: Glutamate 5-kinase (374 aa).

Lysine 13 is an ATP binding site. Substrate is bound by residues serine 54, aspartate 141, and asparagine 153. ATP is bound at residue 173–174 (SD). Residues 278–355 (KGTVHLDSGA…NEIESVLGYP (78 aa)) enclose the PUA domain.

The protein belongs to the glutamate 5-kinase family.

It localises to the cytoplasm. The enzyme catalyses L-glutamate + ATP = L-glutamyl 5-phosphate + ADP. It participates in amino-acid biosynthesis; L-proline biosynthesis; L-glutamate 5-semialdehyde from L-glutamate: step 1/2. In terms of biological role, catalyzes the transfer of a phosphate group to glutamate to form L-glutamate 5-phosphate. This chain is Glutamate 5-kinase, found in Roseobacter denitrificans (strain ATCC 33942 / OCh 114) (Erythrobacter sp. (strain OCh 114)).